The sequence spans 487 residues: Probable Xaa-Pro aminopeptidase CPSG_02684 (487 aa).

Positions 1 to 10 (MAGSNTLSSS) are enriched in polar residues. Residues 1–22 (MAGSNTLSSSEHGDDPRGHSYS) are disordered. The Mn(2+) site is built by Asp275, Asp286, Glu421, and Glu460.

The protein belongs to the peptidase M24B family. Mn(2+) is required as a cofactor.

The catalysed reaction is Release of any N-terminal amino acid, including proline, that is linked to proline, even from a dipeptide or tripeptide.. Functionally, catalyzes the removal of a penultimate prolyl residue from the N-termini of peptides. The protein is Probable Xaa-Pro aminopeptidase CPSG_02684 of Coccidioides posadasii (strain RMSCC 757 / Silveira) (Valley fever fungus).